A 208-amino-acid chain; its full sequence is Adenylate kinase (208 aa).

10-15 is a binding site for ATP; the sequence is GAGKGT. Positions 30-59 are NMP; sequence STGEMLRAAVAAGTPVGLKAKDVMASGGLV. AMP is bound by residues Thr31, Arg36, 57 to 59, 85 to 88, and Gln92; these read GLV and GFPR. The LID stretch occupies residues 126–142; that stretch reads SRVAEMTARGEQVRADD. An ATP-binding site is contributed by Arg127. AMP-binding residues include Arg139 and Arg150. Met178 contacts ATP.

Belongs to the adenylate kinase family. Monomer.

It is found in the cytoplasm. The enzyme catalyses AMP + ATP = 2 ADP. The protein operates within purine metabolism; AMP biosynthesis via salvage pathway; AMP from ADP: step 1/1. Catalyzes the reversible transfer of the terminal phosphate group between ATP and AMP. Plays an important role in cellular energy homeostasis and in adenine nucleotide metabolism. The protein is Adenylate kinase of Nitrobacter hamburgensis (strain DSM 10229 / NCIMB 13809 / X14).